Reading from the N-terminus, the 490-residue chain is Betaine aldehyde dehydrogenase (490 aa).

Thr-26, Ile-27, and Asp-93 together coordinate K(+). 150–152 (GAW) contributes to the NAD(+) binding site. Lys-162 acts as the Charge relay system in catalysis. Residue 176–179 (KPSE) participates in NAD(+) binding. Val-180 serves as a coordination point for K(+). 230–233 (GVAS) is an NAD(+) binding site. Position 246 (Leu-246) interacts with K(+). Glu-252 functions as the Proton acceptor in the catalytic mechanism. NAD(+) is bound by residues Gly-254, Cys-286, and Glu-387. Catalysis depends on Cys-286, which acts as the Nucleophile. At Cys-286 the chain carries Cysteine sulfenic acid (-SOH). K(+)-binding residues include Lys-457 and Gly-460. The active-site Charge relay system is the Glu-464.

It belongs to the aldehyde dehydrogenase family. Dimer of dimers. Requires K(+) as cofactor.

The enzyme catalyses betaine aldehyde + NAD(+) + H2O = glycine betaine + NADH + 2 H(+). It participates in amine and polyamine biosynthesis; betaine biosynthesis via choline pathway; betaine from betaine aldehyde: step 1/1. Involved in the biosynthesis of the osmoprotectant glycine betaine. Catalyzes the irreversible oxidation of betaine aldehyde to the corresponding acid. In Escherichia coli O6:K15:H31 (strain 536 / UPEC), this protein is Betaine aldehyde dehydrogenase.